Here is a 71-residue protein sequence, read N- to C-terminus: UPF0346 protein SPT_1257 (71 aa).

It belongs to the UPF0346 family.

The protein is UPF0346 protein SPT_1257 of Streptococcus pneumoniae (strain Taiwan19F-14).